The following is a 275-amino-acid chain: ATP synthase subunit delta (275 aa).

It belongs to the ATPase delta chain family. In terms of assembly, F-type ATPases have 2 components, F(1) - the catalytic core - and F(0) - the membrane proton channel. F(1) has five subunits: alpha(3), beta(3), gamma(1), delta(1), epsilon(1). F(0) has three main subunits: a(1), b(2) and c(10-14). The alpha and beta chains form an alternating ring which encloses part of the gamma chain. F(1) is attached to F(0) by a central stalk formed by the gamma and epsilon chains, while a peripheral stalk is formed by the delta and b chains.

Its subcellular location is the cell membrane. In terms of biological role, f(1)F(0) ATP synthase produces ATP from ADP in the presence of a proton or sodium gradient. F-type ATPases consist of two structural domains, F(1) containing the extramembraneous catalytic core and F(0) containing the membrane proton channel, linked together by a central stalk and a peripheral stalk. During catalysis, ATP synthesis in the catalytic domain of F(1) is coupled via a rotary mechanism of the central stalk subunits to proton translocation. Functionally, this protein is part of the stalk that links CF(0) to CF(1). It either transmits conformational changes from CF(0) to CF(1) or is implicated in proton conduction. This Bifidobacterium adolescentis (strain ATCC 15703 / DSM 20083 / NCTC 11814 / E194a) protein is ATP synthase subunit delta.